Reading from the N-terminus, the 509-residue chain is CDK5RAP3 protein homolog (509 aa).

Belongs to the CDK5RAP3 family.

Its subcellular location is the nucleus. It localises to the cytoplasm. Substrate adapter of E3 ligase complexes mediating ufmylation, the covalent attachment of the ubiquitin-like modifier UFM1 to substrate proteins, and which is involved in various processes, such as ribosome recycling and reticulophagy (also called ER-phagy). The sequence is that of CDK5RAP3 protein homolog from Drosophila melanogaster (Fruit fly).